A 123-amino-acid polypeptide reads, in one-letter code: uncharacterized protein (123 aa).

A helical transmembrane segment spans residues 1 to 21 (MHIIAKSILLMAVSFLVIIFT).

Its subcellular location is the membrane. This is an uncharacterized protein from Methanocaldococcus jannaschii (strain ATCC 43067 / DSM 2661 / JAL-1 / JCM 10045 / NBRC 100440) (Methanococcus jannaschii).